The chain runs to 203 residues: uncharacterized protein (203 aa).

Residues methionine 1–lysine 23 form a disordered region.

This is an uncharacterized protein from Saccharomyces cerevisiae (strain ATCC 204508 / S288c) (Baker's yeast).